The chain runs to 178 residues: uncharacterized protein (178 aa).

4 helical membrane-spanning segments follow: residues 3 to 23 (IPII…FISI), 56 to 76 (IFLM…NLIF), 101 to 121 (LILP…VAGF), and 150 to 170 (LSLI…YITP).

It to M.jannaschii MJ0706 and Synechocystis PCC 6803 slr1478.

Its subcellular location is the cell membrane. This is an uncharacterized protein from Methanocaldococcus jannaschii (strain ATCC 43067 / DSM 2661 / JAL-1 / JCM 10045 / NBRC 100440) (Methanococcus jannaschii).